A 322-amino-acid polypeptide reads, in one-letter code: Replication factor C small subunit (322 aa).

50-57 (GPAGTGKT) provides a ligand contact to ATP.

It belongs to the activator 1 small subunits family. RfcS subfamily. In terms of assembly, heteromultimer composed of small subunits (RfcS) and large subunits (RfcL).

Functionally, part of the RFC clamp loader complex which loads the PCNA sliding clamp onto DNA. The sequence is that of Replication factor C small subunit from Halobacterium salinarum (strain ATCC 700922 / JCM 11081 / NRC-1) (Halobacterium halobium).